The sequence spans 479 residues: Serine carboxypeptidase-like 44 (479 aa).

Residues Met1–Cys22 form the signal peptide. 3 cysteine pairs are disulfide-bonded: Cys92-Cys352, Cys253-Cys270, and Cys295-Cys320. N-linked (GlcNAc...) asparagine glycosylation occurs at Asn143. The active site involves Ser184. Residue Asn265 is glycosylated (N-linked (GlcNAc...) asparagine). N-linked (GlcNAc...) asparagine glycosylation is present at Asn341. Asp389 is an active-site residue. N-linked (GlcNAc...) asparagine glycosylation occurs at Asn411. The active site involves His446.

Belongs to the peptidase S10 family. Expressed in seedlings.

It localises to the secreted. Probable carboxypeptidase. The sequence is that of Serine carboxypeptidase-like 44 (SCPL44) from Arabidopsis thaliana (Mouse-ear cress).